Reading from the N-terminus, the 557-residue chain is Elongator complex protein 3 (557 aa).

One can recognise a Radical SAM core domain in the interval 91–381; sequence RTASGIAVVA…YRVQRDIPMP (291 aa). The [4Fe-4S] cluster site is built by Cys108, Cys118, and Cys121. Lys173 lines the acetyl-CoA pocket. In terms of domain architecture, N-acetyltransferase spans 405-557; sequence TTCRDVRTRE…LDGPYMSKRI (153 aa). Lys453 participates in a covalent cross-link: Glycyl lysine isopeptide (Lys-Gly) (interchain with G-Cter in ubiquitin). Acetyl-CoA-binding positions include 485–488, 508–510, and Tyr541; these read ELHV and FGT.

It belongs to the ELP3 family. Component of the elongator complex which consists of ELP1/IKI3, ELP2, ELP3, ELP4, ELP5/IKI1 and ELP6. The elongator complex is composed of two copies of the Elp123 subcomplex (composed of ELP1/IKI3, ELP2 and ELP3) and two copies of the Elp456 subcomplex (composed of ELP4, ELP5/IKI1 and ELP6). The Elp123 subcomplex forms a two-lobed scaffold, which binds the Elp456 subcomplex asymmetrically. In each lobe, ELP2 is tightly sandwiched between ELP1/IKI3 and ELP3. The Elp123 subcomplex binds tRNA through ELP1/IKI3 and ELP3 and can bind 2 tRNAs simultaneously. tRNA-binding induces conformational rearrangements which precisely position the targeted anticodon base in the active site. ELP3 interacts with KTI11/DPH3. ELP3 interacts with KTI12. The Elp456 subcomplex binds tRNA and has ATPase activity. It depends on [4Fe-4S] cluster as a cofactor.

The protein resides in the cytoplasm. It localises to the nucleus. It carries out the reaction uridine(34) in tRNA + acetyl-CoA + S-adenosyl-L-methionine + H2O = 5-(carboxymethyl)uridine(34) in tRNA + 5'-deoxyadenosine + L-methionine + CoA + 2 H(+). It participates in tRNA modification; 5-methoxycarbonylmethyl-2-thiouridine-tRNA biosynthesis. Catalytic tRNA acetyltransferase subunit of the elongator complex which is required for multiple tRNA modifications, including mcm5U (5-methoxycarbonylmethyl uridine), mcm5s2U (5-methoxycarbonylmethyl-2-thiouridine), and ncm5U (5-carbamoylmethyl uridine). In the elongator complex, acts as a tRNA uridine(34) acetyltransferase, which mediates formation of carboxymethyluridine in the wobble base at position 34 in tRNAs. The complex functions as a gamma-toxin target (TOT); disruption of the complex confers resistance to Kluyveromyces lactis toxin zymocin (pGKL1 killer toxin). May also be involved in sensitivity to Pichia inositovora toxin. Independently, ELP3 may be involved in polarized exocytosis. The sequence is that of Elongator complex protein 3 from Saccharomyces cerevisiae (strain ATCC 204508 / S288c) (Baker's yeast).